Here is a 202-residue protein sequence, read N- to C-terminus: Pyridoxal 5'-phosphate synthase subunit PdxT (202 aa).

Residue 49-51 (GES) coordinates L-glutamine. The active-site Nucleophile is cysteine 81. L-glutamine is bound by residues arginine 110 and 139–140 (IR). Residues histidine 182 and glutamate 184 each act as charge relay system in the active site.

This sequence belongs to the glutaminase PdxT/SNO family. In terms of assembly, in the presence of PdxS, forms a dodecamer of heterodimers. Only shows activity in the heterodimer.

It carries out the reaction aldehydo-D-ribose 5-phosphate + D-glyceraldehyde 3-phosphate + L-glutamine = pyridoxal 5'-phosphate + L-glutamate + phosphate + 3 H2O + H(+). It catalyses the reaction L-glutamine + H2O = L-glutamate + NH4(+). It functions in the pathway cofactor biosynthesis; pyridoxal 5'-phosphate biosynthesis. Functionally, catalyzes the hydrolysis of glutamine to glutamate and ammonia as part of the biosynthesis of pyridoxal 5'-phosphate. The resulting ammonia molecule is channeled to the active site of PdxS. This Rhodococcus opacus (strain B4) protein is Pyridoxal 5'-phosphate synthase subunit PdxT.